A 911-amino-acid polypeptide reads, in one-letter code: Alpha-actinin-4 (911 aa).

Residues 1 to 30 (MVDYHAASQSYQYGPSSAGNGAGGGGSMGD) form a disordered region. Residues 1 to 269 (MVDYHAASQS…YVSSFYHAFS (269 aa)) are actin-binding. The interval 12-26 (QYGPSSAGNGAGGGG) is interaction with VCL. Position 31 is a phosphotyrosine (Y31). The tract at residues 40–61 (RDLLLDPAWEKQQRKTFTAWCN) is interaction with VCL. Calponin-homology (CH) domains are found at residues 50–154 (KQQR…LRFA) and 163–269 (TSAK…HAFS). Residues 84–88 (LMLLL) carry the LXXLL motif motif. The tract at residues 108–126 (KINNVNKALDFIASKGVKL) is interaction with VCL. At K114 the chain carries N6-acetyllysine. Residues 177-192 (TAPYKNVNVQNFHISW) are polyphosphoinositide (PIP2)-binding. K214 carries the N6-acetyllysine modification. The residue at position 249 (T249) is a Phosphothreonine. 4 Spectrin repeats span residues 293 to 403 (HLME…WLLN), 413 to 518 (HLAE…ALEK), 528 to 639 (QLHL…ALLE), and 649 to 752 (HLRR…EVEN). N6-acetyllysine is present on residues K592 and K625. S696 carries the post-translational modification Phosphoserine. The mediates interaction with MICALL2 stretch occupies residues 736–911 (WEQLLTTIAR…STALYGESDL (176 aa)). EF-hand domains lie at 765 to 800 (EQMQEFRASFNHFDKDHGGALGPEEFKACLISLGYD) and 806 to 841 (QGEAEFNRIMSLVDPNHSGLVTFQAFIDFMSRETTD). D778 lines the Ca(2+) pocket. K779 is modified (N6-acetyllysine). D780 and E789 together coordinate Ca(2+). N6-acetyllysine is present on K859. S909 carries the post-translational modification Phosphoserine.

The protein belongs to the alpha-actinin family. In terms of assembly, homodimer; antiparallel. Identified in a IGF2BP1-dependent mRNP granule complex containing untranslated mRNAs. Component of the CART complex, at least composed of ACTN4, HGS/HRS, MYO5B and TRIM3. Binds TRIM3 at the N-terminus. Interacts with MAGI1. Interacts with PDLIM2. Identified in a complex with CASK, IQGAP1, MAGI2, NPHS1, SPTAN1 and SPTBN1. Interacts with MICALL2 (preferentially in opened conformation); stimulated by RAB13 activation. Interacts with PPARG and RARA. Binds to VCL; this interaction triggers VCL conformational changes. Interacts with SEPTIN14. Interacts with IGSF8.

Its subcellular location is the nucleus. It localises to the cytoplasm. The protein resides in the cell junction. It is found in the cytoskeleton. The protein localises to the stress fiber. Its subcellular location is the perinuclear region. Its function is as follows. F-actin cross-linking protein which is thought to anchor actin to a variety of intracellular structures. This is a bundling protein. Probably involved in vesicular trafficking via its association with the CART complex. The CART complex is necessary for efficient transferrin receptor recycling but not for EGFR degradation. Involved in tight junction assembly in epithelial cells probably through interaction with MICALL2. Links MICALL2 to the actin cytoskeleton and recruits it to the tight junctions. May also function as a transcriptional coactivator, stimulating transcription mediated by the nuclear hormone receptors PPARG and RARA. Association with IGSF8 regulates the immune synapse formation and is required for efficient T-cell activation. The protein is Alpha-actinin-4 of Pongo abelii (Sumatran orangutan).